Reading from the N-terminus, the 108-residue chain is UPF0145 protein Tmel_1129 (108 aa).

It belongs to the UPF0145 family.

This Thermosipho melanesiensis (strain DSM 12029 / CIP 104789 / BI429) protein is UPF0145 protein Tmel_1129.